The primary structure comprises 489 residues: MDIRVYNTLSGKKEPLQPIEPNHVKLYVCGITSYDYCHIGHARSALAFDMIVRYLRYLDYKVTFVRNFTDIDDKIIARANETGVTAQALAERFIDEFHTDMDNLGTLRPDIEPKATEHIQEMIDIIQELVDKDMAYPSAGDVYYVVNSFPEYGKLSGRNIEDMQAGARISINEQKRNPMDFALWKASKPGEPSWESPWGPGRPGWHIECSAMSRKYLGENFDIHGGGKDLIFPHHENEIAQSEGANGKPFANTWIHHGFVTIKDEKMSKSLGNFLTIKDILDHYHPEILRAFIFSTQYRNPLDFSEIAMQDAETALVRLYECLHDIQQLAKGDPTLPALISAKDAAKLNSIETRFQEAMNNDFNTALALGVLYDAIKIINRAQRALTDTPSALDVKMLKGSMTLIQKLAGIVGLLQEDANLFLQQRKEKMLSGIDITEAEIESYIQQRLDARANKDWARSDEIRDILLEKGITLKDGADGTGWSVHRAN.

Residue C29 participates in Zn(2+) binding. Residues 31–41 carry the 'HIGH' region motif; the sequence is ITSYDYCHIGH. Zn(2+)-binding residues include C209, H234, and E238. A 'KMSKS' region motif is present at residues 266–270; sequence KMSKS. K269 lines the ATP pocket.

This sequence belongs to the class-I aminoacyl-tRNA synthetase family. In terms of assembly, monomer. The cofactor is Zn(2+).

The protein resides in the cytoplasm. It carries out the reaction tRNA(Cys) + L-cysteine + ATP = L-cysteinyl-tRNA(Cys) + AMP + diphosphate. In Desulfotalea psychrophila (strain LSv54 / DSM 12343), this protein is Cysteine--tRNA ligase.